Here is a 231-residue protein sequence, read N- to C-terminus: 5'-methylthioadenosine/S-adenosylhomocysteine nucleosidase (231 aa).

Catalysis depends on Glu-12, which acts as the Proton acceptor. Substrate-binding positions include Gly-78, Met-153, and Met-174–Glu-175. Asp-198 (proton donor) is an active-site residue.

It belongs to the PNP/UDP phosphorylase family. MtnN subfamily.

The catalysed reaction is S-adenosyl-L-homocysteine + H2O = S-(5-deoxy-D-ribos-5-yl)-L-homocysteine + adenine. The enzyme catalyses S-methyl-5'-thioadenosine + H2O = 5-(methylsulfanyl)-D-ribose + adenine. It carries out the reaction 5'-deoxyadenosine + H2O = 5-deoxy-D-ribose + adenine. It functions in the pathway amino-acid biosynthesis; L-methionine biosynthesis via salvage pathway; S-methyl-5-thio-alpha-D-ribose 1-phosphate from S-methyl-5'-thioadenosine (hydrolase route): step 1/2. In terms of biological role, catalyzes the irreversible cleavage of the glycosidic bond in both 5'-methylthioadenosine (MTA) and S-adenosylhomocysteine (SAH/AdoHcy) to adenine and the corresponding thioribose, 5'-methylthioribose and S-ribosylhomocysteine, respectively. Also cleaves 5'-deoxyadenosine, a toxic by-product of radical S-adenosylmethionine (SAM) enzymes, into 5-deoxyribose and adenine. The polypeptide is 5'-methylthioadenosine/S-adenosylhomocysteine nucleosidase (Bacillus cereus (strain G9842)).